Consider the following 1185-residue polypeptide: ELMO domain-containing protein F (1185 aa).

Disordered regions lie at residues 88-133, 176-196, 361-409, 566-628, 642-805, 819-868, 883-989, and 1044-1114; these read QPSP…GNNN, ISTNPNNNSNNNNNNNNNTAE, NNNS…VENE, KSTD…NTKS, ETER…KSSG, LGEK…PYII, DLDF…TQVT, and QKQK…KPVL. Low complexity-rich tracts occupy residues 94 to 127, 176 to 194, 361 to 406, and 587 to 613; these read STIHNNSSTSINQSSSPSSSSSTTPSSSTQSSPI, ISTNPNNNSNNNNNNNNNT, NNNS…NNNV, and PQSQQQSQQQTQQTQQPASPLQTSSSS. Residues 275–488 form the ELMO domain; the sequence is DRQNVLSFLN…KTRAVLSRIK (214 aa). The segment covering 648–665 has biased composition (polar residues); that stretch reads SLTGSNGITDGGDSNPNS. The segment covering 688-699 has biased composition (low complexity); the sequence is SENGSSSSFSFE. The segment covering 721 to 732 has biased composition (polar residues); it reads FNSLTGELTMNI. Low complexity-rich tracts occupy residues 733 to 760 and 767 to 780; these read SSSSSLEGNQQQQQQQSTNSSTTSPNVS and TTTTTNTTTATTTT. The span at 781 to 790 shows a compositional bias: polar residues; it reads DDQSQQQVPP. Residues 829–841 show a composition bias toward basic residues; it reads KVKSKKEKKKKSK. Low complexity-rich tracts occupy residues 853 to 864, 912 to 974, 1053 to 1072, and 1096 to 1109; these read NNSANNSSYNNS, SSSN…QQPQ, DENQNQNNNNNKLSDNSSNE, and GRNSTLNSGSSSLS.

The polypeptide is ELMO domain-containing protein F (elmoF) (Dictyostelium discoideum (Social amoeba)).